The chain runs to 190 residues: dITP/XTP pyrophosphatase (190 aa).

A substrate-binding site is contributed by 7-12 (THNPNK). Mg(2+)-binding residues include Glu39 and Asp68. Asp68 (proton acceptor) is an active-site residue. Substrate contacts are provided by residues Thr69, 148 to 151 (FGYD), Lys171, and 176 to 177 (HR).

Belongs to the HAM1 NTPase family. As to quaternary structure, homodimer. Requires Mg(2+) as cofactor.

The enzyme catalyses XTP + H2O = XMP + diphosphate + H(+). The catalysed reaction is dITP + H2O = dIMP + diphosphate + H(+). It carries out the reaction ITP + H2O = IMP + diphosphate + H(+). Functionally, pyrophosphatase that catalyzes the hydrolysis of nucleoside triphosphates to their monophosphate derivatives, with a high preference for the non-canonical purine nucleotides XTP (xanthosine triphosphate), dITP (deoxyinosine triphosphate) and ITP. Seems to function as a house-cleaning enzyme that removes non-canonical purine nucleotides from the nucleotide pool, thus preventing their incorporation into DNA/RNA and avoiding chromosomal lesions. The protein is dITP/XTP pyrophosphatase of Christiangramia forsetii (strain DSM 17595 / CGMCC 1.15422 / KT0803) (Gramella forsetii).